The chain runs to 456 residues: Hydroxymethylglutaryl coenzyme A synthase (456 aa).

A34 contributes to the (3S)-3-hydroxy-3-methylglutaryl-CoA binding site. The active-site Proton donor/acceptor is the E85. Residues C119, T161, S211, H258, K267, N335, and S369 each contribute to the (3S)-3-hydroxy-3-methylglutaryl-CoA site. C119 acts as the Acyl-thioester intermediate in catalysis. The active-site Proton donor/acceptor is H258.

It belongs to the thiolase-like superfamily. HMG-CoA synthase family.

It carries out the reaction acetoacetyl-CoA + acetyl-CoA + H2O = (3S)-3-hydroxy-3-methylglutaryl-CoA + CoA + H(+). Its function is as follows. HMG-CoA synthase; part of the gene cluster that mediates the biosynthesis of 1233A, a natural compound known as an inhibitor of HMG-CoA synthase in the mevalonate pathway and with antibacterial and antifungal activities. This enzyme condenses acetyl-CoA with acetoacetyl-CoA to form HMG-CoA, which is the substrate for HMG-CoA reductase. As part of the 1233A biosynthesis cluster, is involved in conferring self-resistance to 1233A. The polypeptide is Hydroxymethylglutaryl coenzyme A synthase (Fusarium sp).